A 206-amino-acid polypeptide reads, in one-letter code: RILP-like protein 2 (206 aa).

The disordered stretch occupies residues 1-29 (MEEPPLREEEEEEEEDEAGPEGALGKSPL). Positions 8–19 (EEEEEEEEDEAG) are enriched in acidic residues. Residues 19 to 108 (GPEGALGKSP…RREGSAAGPE (90 aa)) form the RH1 domain. Positions 67-159 (LEMLETLVNE…VQEELQCYKS (93 aa)) form a coiled coil. Residues 125–197 (RPRFTLQELR…KEEKTIIRKL (73 aa)) enclose the RH2 domain. Residues 161 to 189 (LIPPREGPGGRREKEALFPRGSNANSNKE) are disordered. The span at 168–177 (PGGRREKEAL) shows a compositional bias: basic and acidic residues.

This sequence belongs to the RILPL family. Homodimer. Interacts with RAC1. Interacts (via N-terminus) with MYO5A, the interaction is required for its role in dendrite formation. Interacts with RAB8A; interaction is dependent on the phosphorylation of RAB8A on 'Thr-72'. Interacts with RAB10 and RAB12; interaction is dependent on the phosphorylation of 'Thr-73' on RAB10 and 'Ser-105' on RAB12.

It is found in the cytoplasm. Its subcellular location is the cytosol. The protein localises to the cytoskeleton. It localises to the microtubule organizing center. The protein resides in the centrosome. It is found in the cell projection. Its subcellular location is the cilium. Functionally, involved in cell shape and neuronal morphogenesis, positively regulating the establishment and maintenance of dendritic spines. Plays a role in cellular protein transport, including protein transport away from primary cilia. May function via activation of RAC1 and PAK1. This Bos taurus (Bovine) protein is RILP-like protein 2 (RILPL2).